The following is a 177-amino-acid chain: Large ribosomal subunit protein uL30 (177 aa).

Belongs to the universal ribosomal protein uL30 family. Part of the 50S ribosomal subunit.

This chain is Large ribosomal subunit protein uL30, found in Pyrobaculum islandicum (strain DSM 4184 / JCM 9189 / GEO3).